The sequence spans 166 residues: MANFFRTAKALIIIPDDIPGRLVIFKLHGRLVYRYQTIRRIITKTGREAYVYRFARLPCTKKPNEPDFQICIISELEYCEPEIGGRRNKHPLSFRYTSCQPFYLKDYDSLDSLYKAMDSTLDSLIIEYSDFISGFGESVEDLAHESTQINVCNLLTDEEEISHDYC.

This is an uncharacterized protein from Acidianus hospitalis (AFV-1).